Consider the following 520-residue polypeptide: DNA-(apurinic or apyrimidinic site) endonuclease 2 (520 aa).

Glutamate 59 contacts Mg(2+). Residue tyrosine 181 is part of the active site. Mg(2+) contacts are provided by aspartate 222, asparagine 224, and aspartate 353. Aspartate 222 (proton donor/acceptor) is an active-site residue. Zn(2+) is bound by residues cysteine 476, histidine 478, cysteine 500, and cysteine 514. The GRF-type zinc-finger motif lies at 476-520; sequence CRHGEESMLKTSKTSANPGRKFWICKRSRGDSNNTESSCGFFQWV.

This sequence belongs to the DNA repair enzymes AP/ExoA family. Mg(2+) is required as a cofactor. Requires Mn(2+) as cofactor.

It is found in the nucleus. The catalysed reaction is Exonucleolytic cleavage in the 3'- to 5'-direction to yield nucleoside 5'-phosphates.. Functionally, DNA repair enzyme that cleaves apurinic/apyrimidinic (AP) sites and removes 3'-blocking groups present at single strand breaks of damaged DNA. This Saccharomyces cerevisiae (strain ATCC 204508 / S288c) (Baker's yeast) protein is DNA-(apurinic or apyrimidinic site) endonuclease 2 (APN2).